The sequence spans 236 residues: MEKREELYRGKAKSVYKTDDADRLILLFRNDTSAFDGKRIEQLDRKGTVNNKFNAFIMQKLEEAGIPTQFDKLLGDNECLVKKLDMIPVECVVRNYAAGSLVKRLGIEEGTKLNPYTFELFLKDDAKGDPFINESHVVAFGWGTAEQLVRMKELSIKVNEVLTKLFDDAGLLLVDFKLEFGVFHGEIVLGDEFSPDGCRLWDKDTRKKMDKDRFRQGLGDVIEAYEEVANRLGVPL.

This sequence belongs to the SAICAR synthetase family.

The enzyme catalyses 5-amino-1-(5-phospho-D-ribosyl)imidazole-4-carboxylate + L-aspartate + ATP = (2S)-2-[5-amino-1-(5-phospho-beta-D-ribosyl)imidazole-4-carboxamido]succinate + ADP + phosphate + 2 H(+). It participates in purine metabolism; IMP biosynthesis via de novo pathway; 5-amino-1-(5-phospho-D-ribosyl)imidazole-4-carboxamide from 5-amino-1-(5-phospho-D-ribosyl)imidazole-4-carboxylate: step 1/2. This Pseudomonas syringae pv. tomato (strain ATCC BAA-871 / DC3000) protein is Phosphoribosylaminoimidazole-succinocarboxamide synthase.